Reading from the N-terminus, the 354-residue chain is MLLLHWDNMGKIELHHVFVMLSCIYLIFSDISINSAVVFLFSSIFFYISFTAGKRLYYLIGIDKENLKINLKKHYNFGIFLMIVGLIAVTSDLIWVKDVPLFNPLSRKFLNVYFTTLSHLFLVGWAIVVASSNIDKKKILLYTIIFSILIMLLGYRTNVLVLLISVGAILYYKNKISNREILKYGILVFVILLGLSILRLYALGVEGNPITSRISLTMSIYDIIFNNFNGVFNGYIHYSAVFSYLGLCNGARTVIAKTLGIYNVSITPTIVGAVIGDYGTLAIIPYFGILGIFLGFFYKLAKDVKGIYLGIYGILFAYTLIGIESGILDIDVILYYFFGLILCIYAILLRKLKR.

9 helical membrane passes run 9 to 29 (MGKIELHHVFVMLSCIYLIFS), 31 to 51 (ISINSAVVFLFSSIFFYISFT), 76 to 96 (NFGIFLMIVGLIAVTSDLIWV), 109 to 129 (FLNVYFTTLSHLFLVGWAIVV), 144 to 164 (IIFSILIMLLGYRTNVLVLLI), 185 to 205 (GILVFVILLGLSILRLYALGV), 278 to 298 (YGTLAIIPYFGILGIFLGFFY), 306 to 326 (GIYLGIYGILFAYTLIGIESG), and 327 to 347 (ILDIDVILYYFFGLILCIYAI).

Its subcellular location is the cell membrane. This is an uncharacterized protein from Methanocaldococcus jannaschii (strain ATCC 43067 / DSM 2661 / JAL-1 / JCM 10045 / NBRC 100440) (Methanococcus jannaschii).